The sequence spans 480 residues: Aromatic-L-amino-acid decarboxylase (480 aa).

Lysine 292 carries the N6-(pyridoxal phosphate)lysine modification.

The protein belongs to the group II decarboxylase family. Requires pyridoxal 5'-phosphate as cofactor.

It catalyses the reaction L-tryptophan + H(+) = tryptamine + CO2. The enzyme catalyses L-phenylalanine + H(+) = 2-phenylethylamine + CO2. It carries out the reaction 5-hydroxy-L-tryptophan + H(+) = serotonin + CO2. The catalysed reaction is L-dopa + H(+) = dopamine + CO2. Functionally, involved in bacillamide C biosynthesis. Catalyzes the decarboxylation of L-tryptophan to tryptamine. The tryptamine obtained is then probably incorporated into the bacillamide C peptide, which is derived from the amino acids alanine, cysteine and tryptophan through nonribosomal peptide synthetase (NRPS) biosynthesis strategy. L-tryptophan is the best substrate, but the enzyme displays broad substrate specificity for various aromatic amino acids in vitro and it can also catalyze the decarboxylation of L-phenylalanine, 5-hydroxy-L-tryptophan (L-HTP) and L-DOPA, with lower efficiency. Exhibits weak activity with L-tyrosine. This chain is Aromatic-L-amino-acid decarboxylase, found in Bacillus atrophaeus.